A 446-amino-acid chain; its full sequence is MTAKNVGLTSTNAEVRGFIDQNLSPTKGNISFVAFPVSNTNSPTKILPKTLGPINVNVGPQMIISTPQRLTSSGSVLIGSPYTPAPAMVTQTHIAEATGWVPGDRKRARKFIDSDFSESKRSKKGDKNGKGLRHFSMKVCEKVQRKGTTSYNEVADELVSEFTNSNNHLAADSAYDQKNIRRRVYDALNVLMAMNIISKEKKEIKWIGLPTNSAQECQNLEIEKQRRIERIKQKRAQLQELLLQQIAFKNLVQRNRQNEQQNQGPPALNSTIQLPFIIINTSRKTVIDCSISSDKFEYLFNFDNTFEIHDDIEVLKRMGMSFGLESGKCSLEDLKLAKSLVPKALEGYITDISTGPSWLNQGLLLNSTQSVSNLDLTTGATLPQSSVNQGLCLDAEVALATGQFLAPNSHQSSSAASHCSESRGETPCSFNDEDEEDDEEDSSSPE.

Residue Thr2 is modified to N-acetylthreonine. Residue Ser24 is modified to Phosphoserine. Residues 60–82 (PQMIISTPQRLTSSGSVLIGSPY) form an interaction with CEBPA region. Positions 103-118 (GDRKRARKFIDSDFSE) match the Nuclear localization signal motif. Phosphoserine is present on Ser122. Residues 129 to 210 (GKGLRHFSMK…KKEIKWIGLP (82 aa)) mediate DNA binding. Residues 176–210 (DQKNIRRRVYDALNVLMAMNIISKEKKEIKWIGLP) carry the DEF box motif. Residues 219–292 (NLEIEKQRRI…RKTVIDCSIS (74 aa)) are dimerization. The tract at residues 229-261 (ERIKQKRAQLQELLLQQIAFKNLVQRNRQNEQQ) is DCB1. Positions 274-330 (LPFIIINTSRKTVIDCSISSDKFEYLFNFDNTFEIHDDIEVLKRMGMSFGLESGKCS) are DCB2. Over residues 409–419 (SHQSSSAASHC) the composition is skewed to low complexity. Positions 409-446 (SHQSSSAASHCSESRGETPCSFNDEDEEDDEEDSSSPE) are disordered. A compositionally biased stretch (acidic residues) spans 431-446 (NDEDEEDDEEDSSSPE).

This sequence belongs to the E2F/DP family. In terms of assembly, component of the DRTF1/E2F transcription factor complex. Forms heterodimers with E2F family members. The complex can interact with hypophosphorylated retinoblastoma protein RB1 and related proteins (RBL1 and RBL2) that inhibit the E2F transactivation domain. During the cell cycle, RB becomes phosphorylated in mid-to-late G1 phase, detaches from the DRTF1/E2F complex rendering E2F transcriptionally active. Viral oncoproteins, notably E1A, T-antigen and HPV E7, are capable of sequestering RB protein, thus releasing the active complex. Interacts with GMCL. Component of the DREAM complex (also named LINC complex) at least composed of E2F4, E2F5, LIN9, LIN37, LIN52, LIN54, MYBL1, MYBL2, RBL1, RBL2, RBBP4, TFDP1 and TFDP2. The complex exists in quiescent cells where it represses cell cycle-dependent genes. It dissociates in S phase when LIN9, LIN37, LIN52 and LIN54 form a subcomplex that binds to MYBL2. The complex TFDP2:E2F1 interacts with CEBPA; the interaction prevents CEBPA binding to target genes promoters and represses its transcriptional activity. In terms of processing, ser-24 is probably phosphorylated by CDK2. As to expression, high levels in heart and skeletal muscle. Also found in placenta, kidney, brain, lung and liver. The presence as well as the abundance of the different transcripts appear to vary significantly in different tissues and cell lines.

The protein localises to the nucleus. Functionally, can stimulate E2F-dependent transcription. Binds DNA cooperatively with E2F family members through the E2 recognition site, 5'-TTTC[CG]CGC-3', found in the promoter region of a number of genes whose products are involved in cell cycle regulation or in DNA replication. The TFDP2:E2F complex functions in the control of cell-cycle progression from G1 to S phase. The E2F1:DP complex appears to mediate both cell proliferation and apoptosis. Blocks adipocyte differentiation by repressing CEBPA binding to its target gene promoters. This Homo sapiens (Human) protein is Transcription factor Dp-2 (TFDP2).